The sequence spans 129 residues: Small ribosomal subunit protein uS11 (129 aa).

This sequence belongs to the universal ribosomal protein uS11 family. As to quaternary structure, part of the 30S ribosomal subunit. Interacts with proteins S7 and S18. Binds to IF-3.

Its function is as follows. Located on the platform of the 30S subunit, it bridges several disparate RNA helices of the 16S rRNA. Forms part of the Shine-Dalgarno cleft in the 70S ribosome. The sequence is that of Small ribosomal subunit protein uS11 from Enterobacter sp. (strain 638).